We begin with the raw amino-acid sequence, 158 residues long: Putative pre-16S rRNA nuclease (158 aa).

Residues 138–158 (ELKPAQQTASRSGAGAGDGGS) are disordered.

It belongs to the YqgF nuclease family.

The protein resides in the cytoplasm. Functionally, could be a nuclease involved in processing of the 5'-end of pre-16S rRNA. The protein is Putative pre-16S rRNA nuclease of Synechococcus sp. (strain CC9605).